Consider the following 28-residue polypeptide: Dermaseptin-DI2 (28 aa).

Expressed by the skin glands.

The protein localises to the secreted. In terms of biological role, has antibacterial activity against the Gram-positive bacteria S.aureus and E.faecalis, and the Gram-negative bacteria P.aeruginosa and E.coli. Has antiprotozoal activity against T.cruzi. Has antifungal activity against the yeasts C.tropicalis (MIC=10.9 uM), C.guilliermondii (MIC=21.8 uM), C.albicans (MIC=21.8 uM) and C.albicans ATCC 1023 (MIC=10.9 uM). Decreases viability of murine peritoneal cells. Fuses to, and disrupts liposomes. The protein is Dermaseptin-DI2 of Phyllomedusa distincta (Monkey frog).